We begin with the raw amino-acid sequence, 260 residues long: ELL-associated factor 2 (260 aa).

A necessary for interaction with ELL region spans residues 17–104; the sequence is LKLGESFEKQ…TGECRLEKLS (88 aa). Residues 116 to 126 are compositionally biased toward basic and acidic residues; that stretch reads GSSKIQYRKEQ. Disordered regions lie at residues 116 to 154 and 170 to 234; these read GSSKIQYRKEQQQQQMWNSARTPNLVKHSPSEDKMSPAS and MDQM…HNRF. 3 positions are modified to phosphoserine: serine 146, serine 151, and serine 154. Residues 174–192 show a composition bias toward low complexity; sequence SSCDSSSDSKSSSSSSSED. The segment at 177–260 is necessary for transactivation activity; the sequence is DSSSDSKSSS…LSESGSDSDD (84 aa). The segment covering 225 to 234 has biased composition (basic and acidic residues); the sequence is PDIDASHNRF. Residues 246-260 are necessary for interaction with TCEA1 and transactivation activity; the sequence is RNDLQLSESGSDSDD.

It belongs to the EAF family. In terms of assembly, isoform 1 and isoform 2 interact with TCEA1. Component of the super elongation complex (SEC), at least composed of EAF1, EAF2, CDK9, MLLT3/AF9, AFF (AFF1 or AFF4), the P-TEFb complex and ELL (ELL, ELL2 or ELL3). Interacts with ELL and ELL2. Expressed in heart, brain, placenta, lung, skeletal muscle, kidney, pancreas, spleen, prostate, testis, small intestine, colon, adrenal, bone marrow, lymph node, spinal gland, stomach, thyroid, trachea, thymus, liver and leukocytes.

The protein resides in the nucleus speckle. Functionally, acts as a transcriptional transactivator of TCEA1 elongation activity. Acts as a transcriptional transactivator of ELL and ELL2 elongation activities. Potent inducer of apoptosis in prostatic and non-prostatic cell lines. Inhibits prostate tumor growth in vivo. This chain is ELL-associated factor 2 (EAF2), found in Homo sapiens (Human).